A 407-amino-acid chain; its full sequence is Phospholipase A1-II 7 (407 aa).

Ser230 serves as the catalytic Acyl-ester intermediate. Active-site charge relay system residues include Ser230, Asp299, and His336.

Belongs to the AB hydrolase superfamily. Lipase family.

It localises to the cytoplasm. Its function is as follows. Acylhydrolase that catalyzes the hydrolysis of phospholipids at the sn-1 position. This is Phospholipase A1-II 7 from Oryza sativa subsp. indica (Rice).